Here is a 150-residue protein sequence, read N- to C-terminus: D-aminoacyl-tRNA deacylase (150 aa).

A Gly-cisPro motif, important for rejection of L-amino acids motif is present at residues 138 to 139 (GP).

It belongs to the DTD family. Homodimer.

It is found in the cytoplasm. It carries out the reaction glycyl-tRNA(Ala) + H2O = tRNA(Ala) + glycine + H(+). The catalysed reaction is a D-aminoacyl-tRNA + H2O = a tRNA + a D-alpha-amino acid + H(+). Its function is as follows. An aminoacyl-tRNA editing enzyme that deacylates mischarged D-aminoacyl-tRNAs. Also deacylates mischarged glycyl-tRNA(Ala), protecting cells against glycine mischarging by AlaRS. Acts via tRNA-based rather than protein-based catalysis; rejects L-amino acids rather than detecting D-amino acids in the active site. By recycling D-aminoacyl-tRNA to D-amino acids and free tRNA molecules, this enzyme counteracts the toxicity associated with the formation of D-aminoacyl-tRNA entities in vivo and helps enforce protein L-homochirality. This Christiangramia forsetii (strain DSM 17595 / CGMCC 1.15422 / KT0803) (Gramella forsetii) protein is D-aminoacyl-tRNA deacylase.